A 106-amino-acid chain; its full sequence is 3-phenylpropionate/cinnamic acid dioxygenase ferredoxin subunit (106 aa).

Residues 4–99 (IYACPVADVP…VHVEGGDIFI (96 aa)) enclose the Rieske domain. [2Fe-2S] cluster contacts are provided by Cys-42, His-44, Cys-62, and His-65.

This sequence belongs to the bacterial ring-hydroxylating dioxygenase ferredoxin component family. As to quaternary structure, this dioxygenase system consists of four proteins: the two subunits of the hydroxylase component (HcaE and HcaF), a ferredoxin (HcaC) and a ferredoxin reductase (HcaD). Requires [2Fe-2S] cluster as cofactor.

The protein operates within aromatic compound metabolism; 3-phenylpropanoate degradation. In terms of biological role, part of the multicomponent 3-phenylpropionate dioxygenase, that converts 3-phenylpropionic acid (PP) and cinnamic acid (CI) into 3-phenylpropionate-dihydrodiol (PP-dihydrodiol) and cinnamic acid-dihydrodiol (CI-dihydrodiol), respectively. This protein seems to be a 2Fe-2S ferredoxin. This is 3-phenylpropionate/cinnamic acid dioxygenase ferredoxin subunit from Escherichia coli O139:H28 (strain E24377A / ETEC).